The sequence spans 715 residues: Polyribonucleotide nucleotidyltransferase (715 aa).

Residues D485 and D491 each contribute to the Mg(2+) site. Residues 552–611 (PRIHTMKIDPKKIKDVIGKGGAVIRALTEETGTSIDIDDDGTVKIAATDNNAAKAVMARI) enclose the KH domain. The 69-residue stretch at 621–689 (NAIYKGKVTR…RQNRIRLTMK (69 aa)) folds into the S1 motif domain. Positions 695 to 715 (TPVAENVTEEAEVSSEQQAEI) are disordered.

It belongs to the polyribonucleotide nucleotidyltransferase family. As to quaternary structure, component of the RNA degradosome, which is a multiprotein complex involved in RNA processing and mRNA degradation. Requires Mg(2+) as cofactor.

The protein resides in the cytoplasm. It catalyses the reaction RNA(n+1) + phosphate = RNA(n) + a ribonucleoside 5'-diphosphate. Functionally, involved in mRNA degradation. Catalyzes the phosphorolysis of single-stranded polyribonucleotides processively in the 3'- to 5'-direction. In Actinobacillus pleuropneumoniae serotype 7 (strain AP76), this protein is Polyribonucleotide nucleotidyltransferase.